We begin with the raw amino-acid sequence, 161 residues long: MSIVTKSIVNADAEARYLSPGELDRIKSFVAGGQQRLRIAQALTDNRERLVKQAGDQLFQKRPDVVSPGGNAYGQEMTATCLRDLDYYLRLVTYGIVAGDVTPIEEIGVIGVREMYKSLGTPIEAVGEGVRALKNAASTLLSAEDAAEAGSYFDYVVGALQ.

Asparagine 71 is subject to N4-methylasparagine. Residue cysteine 81 coordinates (2R,3E)-phycocyanobilin.

Belongs to the phycobiliprotein family. In terms of assembly, heterohexamer of two alpha chains, one alpha-B chain and three beta chains. In terms of processing, contains one covalently linked phycocyanobilin chromophore. The chromophore is added by phycocyanobilin lyase CpcS 1.

The protein localises to the cellular thylakoid membrane. Functionally, light-harvesting photosynthetic bile pigment-protein from the phycobiliprotein complex. Allophycocyanin has a maximum absorption at approximately 650 to 653 nanometers. The polypeptide is Allophycocyanin subunit alpha 1 (apcA1) (Nostoc sp. (strain PCC 7120 / SAG 25.82 / UTEX 2576)).